The chain runs to 396 residues: Pectate lyase 5 (396 aa).

The N-terminal stretch at 1-25 (MGIKHCCYILYFTLALVTLLQPVRS) is a signal peptide. N-linked (GlcNAc...) asparagine glycosylation is present at asparagine 36. The cysteines at positions 53 and 70 are disulfide-linked. Positions 193, 217, and 221 each coordinate Ca(2+). Arginine 273 is an active-site residue.

The protein belongs to the polysaccharide lyase 1 family. Amb a subfamily. In terms of assembly, monomer. Requires Ca(2+) as cofactor. Post-translationally, the N-terminus is blocked. In terms of tissue distribution, pollen and flowers.

It carries out the reaction Eliminative cleavage of (1-&gt;4)-alpha-D-galacturonan to give oligosaccharides with 4-deoxy-alpha-D-galact-4-enuronosyl groups at their non-reducing ends.. The protein operates within glycan metabolism; pectin degradation; 2-dehydro-3-deoxy-D-gluconate from pectin: step 2/5. Has pectate lyase activity. The sequence is that of Pectate lyase 5 from Ambrosia artemisiifolia (Common ragweed).